The following is a 345-amino-acid chain: MSTDPDEREVSPALTVGDGDVDVSLRPRSLREFIGQPRVREQLQLVIQGAKNRGGTPDHILLSGPPGLGKTSLAMIIAAELGSSLRMTSGPALERAGDLAAMLSNLVEHDVLFIDEIHRIARPAEEMLYLAMEDFRVDVVVGKGPGATSIPLDVAPFTLVGATTRSGALTGPLRDRFGFTAHMDFYEPAELERVLVRSAGILGIQLGADAGAEIARRSRGTPRIANRLLRRVRDFAEVRADGVITRDVAKAALAVYDVDELGLDRLDRAVLSALTRSFSGGPVGVSTLAVAVGEEASTVEEVCEPFLVRAGMVARTPRGRVATALAWTHLGMTPPAGANQPGLFE.

The tract at residues 1 to 186 (MSTDPDEREV…FGFTAHMDFY (186 aa)) is large ATPase domain (RuvB-L). ATP contacts are provided by residues leucine 25, arginine 26, glycine 67, lysine 70, threonine 71, serine 72, 133-135 (EDF), arginine 176, tyrosine 186, and arginine 223. Threonine 71 serves as a coordination point for Mg(2+). Residues 187–257 (EPAELERVLV…VAKAALAVYD (71 aa)) form a small ATPAse domain (RuvB-S) region. Positions 260–345 (ELGLDRLDRA…AGANQPGLFE (86 aa)) are head domain (RuvB-H). Arginine 315 and arginine 320 together coordinate DNA.

The protein belongs to the RuvB family. In terms of assembly, homohexamer. Forms an RuvA(8)-RuvB(12)-Holliday junction (HJ) complex. HJ DNA is sandwiched between 2 RuvA tetramers; dsDNA enters through RuvA and exits via RuvB. An RuvB hexamer assembles on each DNA strand where it exits the tetramer. Each RuvB hexamer is contacted by two RuvA subunits (via domain III) on 2 adjacent RuvB subunits; this complex drives branch migration. In the full resolvosome a probable DNA-RuvA(4)-RuvB(12)-RuvC(2) complex forms which resolves the HJ.

The protein localises to the cytoplasm. The enzyme catalyses ATP + H2O = ADP + phosphate + H(+). Functionally, the RuvA-RuvB-RuvC complex processes Holliday junction (HJ) DNA during genetic recombination and DNA repair, while the RuvA-RuvB complex plays an important role in the rescue of blocked DNA replication forks via replication fork reversal (RFR). RuvA specifically binds to HJ cruciform DNA, conferring on it an open structure. The RuvB hexamer acts as an ATP-dependent pump, pulling dsDNA into and through the RuvAB complex. RuvB forms 2 homohexamers on either side of HJ DNA bound by 1 or 2 RuvA tetramers; 4 subunits per hexamer contact DNA at a time. Coordinated motions by a converter formed by DNA-disengaged RuvB subunits stimulates ATP hydrolysis and nucleotide exchange. Immobilization of the converter enables RuvB to convert the ATP-contained energy into a lever motion, pulling 2 nucleotides of DNA out of the RuvA tetramer per ATP hydrolyzed, thus driving DNA branch migration. The RuvB motors rotate together with the DNA substrate, which together with the progressing nucleotide cycle form the mechanistic basis for DNA recombination by continuous HJ branch migration. Branch migration allows RuvC to scan DNA until it finds its consensus sequence, where it cleaves and resolves cruciform DNA. The sequence is that of Holliday junction branch migration complex subunit RuvB from Mycobacterium marinum (strain ATCC BAA-535 / M).